A 167-amino-acid polypeptide reads, in one-letter code: NADH-quinone oxidoreductase subunit B (167 aa).

The [4Fe-4S] cluster site is built by Cys-40, Cys-41, Cys-105, and Cys-134.

This sequence belongs to the complex I 20 kDa subunit family. NDH-1 is composed of 14 different subunits. Subunits NuoB, C, D, E, F, and G constitute the peripheral sector of the complex. [4Fe-4S] cluster serves as cofactor.

It is found in the cell inner membrane. It carries out the reaction a quinone + NADH + 5 H(+)(in) = a quinol + NAD(+) + 4 H(+)(out). NDH-1 shuttles electrons from NADH, via FMN and iron-sulfur (Fe-S) centers, to quinones in the respiratory chain. The immediate electron acceptor for the enzyme in this species is believed to be ubiquinone. Couples the redox reaction to proton translocation (for every two electrons transferred, four hydrogen ions are translocated across the cytoplasmic membrane), and thus conserves the redox energy in a proton gradient. The polypeptide is NADH-quinone oxidoreductase subunit B (Campylobacter jejuni subsp. jejuni serotype O:6 (strain 81116 / NCTC 11828)).